The chain runs to 211 residues: Ribonuclease HII (211 aa).

One can recognise an RNase H type-2 domain in the interval 1 to 205; that stretch reads MRFGVDEAGK…CDDVLAAASQ (205 aa). 3 residues coordinate a divalent metal cation: aspartate 6, glutamate 7, and aspartate 100.

This sequence belongs to the RNase HII family. Mn(2+) serves as cofactor. Requires Mg(2+) as cofactor.

Its subcellular location is the cytoplasm. It catalyses the reaction Endonucleolytic cleavage to 5'-phosphomonoester.. Endonuclease that specifically degrades the RNA of RNA-DNA hybrids. The protein is Ribonuclease HII of Haloarcula marismortui (strain ATCC 43049 / DSM 3752 / JCM 8966 / VKM B-1809) (Halobacterium marismortui).